The sequence spans 507 residues: Dolichyl pyrophosphate Man9GlcNAc2 alpha-1,3-glucosyltransferase (507 aa).

At M1–K3 the chain is on the cytoplasmic side. Residues W4–G24 traverse the membrane as a helical segment. The Lumenal segment spans residues S25–T114. Residue N59 is glycosylated (N-linked (GlcNAc...) asparagine). The helical transmembrane segment at T115–L135 threads the bilayer. The Cytoplasmic segment spans residues K136 to K143. The helical transmembrane segment at V144–F164 threads the bilayer. Residues Q165–S168 are Lumenal-facing. A helical transmembrane segment spans residues V169 to G189. The Cytoplasmic portion of the chain corresponds to S190–K226. The helical transmembrane segment at G227–L247 threads the bilayer. Residues P248–Q297 lie on the Lumenal side of the membrane. Residues L298–V318 traverse the membrane as a helical segment. At Q319–L338 the chain is on the cytoplasmic side. Residues F339–I359 traverse the membrane as a helical segment. At N360–E361 the chain is on the lumenal side. The helical transmembrane segment at V362–L382 threads the bilayer. The Cytoplasmic segment spans residues K383–L387. Residues L388–F408 form a helical membrane-spanning segment. The Lumenal portion of the chain corresponds to E409–S441. Residues L442–P462 traverse the membrane as a helical segment. Residues P463–S473 are Cytoplasmic-facing. A helical transmembrane segment spans residues V474–L494. Over W495–S507 the chain is Lumenal.

The protein belongs to the ALG6/ALG8 glucosyltransferase family.

It is found in the endoplasmic reticulum membrane. It catalyses the reaction an alpha-D-Man-(1-&gt;2)-alpha-D-Man-(1-&gt;2)-alpha-D-Man-(1-&gt;3)-[alpha-D-Man-(1-&gt;2)-alpha-D-Man-(1-&gt;3)-[alpha-D-Man-(1-&gt;2)-alpha-D-Man-(1-&gt;6)]-alpha-D-Man-(1-&gt;6)]-beta-D-Man-(1-&gt;4)-beta-D-GlcNAc-(1-&gt;4)-alpha-D-GlcNAc-diphospho-di-trans,poly-cis-dolichol + a di-trans,poly-cis-dolichyl beta-D-glucosyl phosphate = an alpha-D-Glc-(1-&gt;3)-alpha-D-Man-(1-&gt;2)-alpha-D-Man-(1-&gt;2)-alpha-D-Man-(1-&gt;3)-[alpha-D-Man-(1-&gt;2)-alpha-D-Man-(1-&gt;3)-[alpha-D-Man-(1-&gt;2)-alpha-D-Man-(1-&gt;6)]-alpha-D-Man-(1-&gt;6)]-beta-D-Man-(1-&gt;4)-beta-D-GlcNAc-(1-&gt;4)-alpha-D-GlcNAc-diphospho-di-trans,poly-cis-dolichol + a di-trans,poly-cis-dolichyl phosphate + H(+). It participates in protein modification; protein glycosylation. Functionally, dolichyl pyrophosphate Man9GlcNAc2 alpha-1,3-glucosyltransferase that operates in the biosynthetic pathway of dolichol-linked oligosaccharides, the glycan precursors employed in protein asparagine (N)-glycosylation. The assembly of dolichol-linked oligosaccharides begins on the cytosolic side of the endoplasmic reticulum membrane and finishes in its lumen. The sequential addition of sugars to dolichol pyrophosphate produces dolichol-linked oligosaccharides containing fourteen sugars, including two GlcNAcs, nine mannoses and three glucoses. Once assembled, the oligosaccharide is transferred from the lipid to nascent proteins by oligosaccharyltransferases. In the lumen of the endoplasmic reticulum, adds the first glucose residue from dolichyl phosphate glucose (Dol-P-Glc) onto the lipid-linked oligosaccharide intermediate Man(9)GlcNAc(2)-PP-Dol to produce Glc(1)Man(9)GlcNAc(2)-PP-Dol. Glc(1)Man(9)GlcNAc(2)-PP-Dol is a substrate for ALG8, the following enzyme in the biosynthetic pathway. This is Dolichyl pyrophosphate Man9GlcNAc2 alpha-1,3-glucosyltransferase from Gallus gallus (Chicken).